We begin with the raw amino-acid sequence, 158 residues long: SsrA-binding protein (158 aa).

It belongs to the SmpB family.

The protein resides in the cytoplasm. Functionally, required for rescue of stalled ribosomes mediated by trans-translation. Binds to transfer-messenger RNA (tmRNA), required for stable association of tmRNA with ribosomes. tmRNA and SmpB together mimic tRNA shape, replacing the anticodon stem-loop with SmpB. tmRNA is encoded by the ssrA gene; the 2 termini fold to resemble tRNA(Ala) and it encodes a 'tag peptide', a short internal open reading frame. During trans-translation Ala-aminoacylated tmRNA acts like a tRNA, entering the A-site of stalled ribosomes, displacing the stalled mRNA. The ribosome then switches to translate the ORF on the tmRNA; the nascent peptide is terminated with the 'tag peptide' encoded by the tmRNA and targeted for degradation. The ribosome is freed to recommence translation, which seems to be the essential function of trans-translation. The chain is SsrA-binding protein from Chloroflexus aggregans (strain MD-66 / DSM 9485).